The sequence spans 413 residues: Serine hydroxymethyltransferase (413 aa).

Residues L120 and 124 to 126 contribute to the (6S)-5,6,7,8-tetrahydrofolate site; that span reads GHL. K228 is subject to N6-(pyridoxal phosphate)lysine.

The protein belongs to the SHMT family. Homodimer. Requires pyridoxal 5'-phosphate as cofactor.

The protein resides in the cytoplasm. The catalysed reaction is (6R)-5,10-methylene-5,6,7,8-tetrahydrofolate + glycine + H2O = (6S)-5,6,7,8-tetrahydrofolate + L-serine. The protein operates within one-carbon metabolism; tetrahydrofolate interconversion. Its pathway is amino-acid biosynthesis; glycine biosynthesis; glycine from L-serine: step 1/1. Its function is as follows. Catalyzes the reversible interconversion of serine and glycine with tetrahydrofolate (THF) serving as the one-carbon carrier. This reaction serves as the major source of one-carbon groups required for the biosynthesis of purines, thymidylate, methionine, and other important biomolecules. Also exhibits THF-independent aldolase activity toward beta-hydroxyamino acids, producing glycine and aldehydes, via a retro-aldol mechanism. The sequence is that of Serine hydroxymethyltransferase from Agathobacter rectalis (strain ATCC 33656 / DSM 3377 / JCM 17463 / KCTC 5835 / VPI 0990) (Eubacterium rectale).